The primary structure comprises 119 residues: Holo-[acyl-carrier-protein] synthase (119 aa).

Mg(2+) is bound by residues D7 and E53.

This sequence belongs to the P-Pant transferase superfamily. AcpS family. Mg(2+) is required as a cofactor.

The protein localises to the cytoplasm. It catalyses the reaction apo-[ACP] + CoA = holo-[ACP] + adenosine 3',5'-bisphosphate + H(+). Transfers the 4'-phosphopantetheine moiety from coenzyme A to a Ser of acyl-carrier-protein. The sequence is that of Holo-[acyl-carrier-protein] synthase from Dehalococcoides mccartyi (strain CBDB1).